The following is a 497-amino-acid chain: Cytochrome P450 CYP94D108 (497 aa).

The chain crosses the membrane as a helical span at residues 6-26 (LLSLALLLLAAAAAAAFVLFP). Position 439 (Cys-439) interacts with heme.

The protein belongs to the cytochrome P450 family. In terms of tissue distribution, mainly expressed in roots and, at low levels, in leaves, fruits and stems.

The protein resides in the membrane. Its pathway is steroid metabolism; cholesterol metabolism. Its function is as follows. Involved in the biosynthesis of spiroketal steroid and saponin natural products from cholesterol such as diosgenin and analogs (e.g. furostanol and spirostanol), plant defense compounds used as main precursors for the industrial production of steroid hormones. During the 5,6-spiroketalization of cholesterol, may catalyze the 27-monohydroxylation of furostanol-type steroid to an intermediate product that undergoes a stereospecific formation of the terminal heterocycle to yield diosgenin. The sequence is that of Cytochrome P450 CYP94D108 from Paris polyphylla (Daiswa polyphylla).